Here is a 388-residue protein sequence, read N- to C-terminus: Interferon alpha/beta receptor 1b (388 aa).

Fibronectin type-III domains follow at residues 5 to 102 (LPQP…FCPD) and 109 to 211 (PPSR…TEGD). A helical membrane pass occupies residues 217 to 237 (IFLYFLVSMMVCFLLVLLSSY). The interval 308–357 (TAPPSELEQDSGRHIRQDSGDSGIYSTEGGSAQQGRSGGEPIRRDQEVDS) is disordered. The span at 317–326 (DSGRHIRQDS) shows a compositional bias: basic and acidic residues. Positions 331-342 (IYSTEGGSAQQG) are enriched in polar residues.

This sequence belongs to the type II cytokine receptor family. In terms of assembly, heterodimer with IFNAR2; forming the receptor for type I interferon.

The protein localises to the cell membrane. It localises to the cytoplasm. It is found in the perinuclear region. Its function is as follows. Together with IFNAR2, forms the heterodimeric receptor for type I interferons (including interferons alpha, beta, epsilon, omega and kappa). Type I interferon binding activates the JAK-STAT signaling cascade, resulting in transcriptional activation or repression of interferon-regulated genes that encode the effectors of the interferon response. Mechanistically, type I interferon-binding brings the IFNAR1 and IFNAR2 subunits into close proximity with one another, driving their associated Janus kinases (JAKs) (TYK2 bound to IFNAR1 and JAK1 bound to IFNAR2) to cross-phosphorylate one another. The activated kinases phosphorylate specific tyrosine residues on the intracellular domains of IFNAR1 and IFNAR2, forming docking sites for the STAT transcription factors. STAT proteins are then phosphorylated by the JAKs, promoting their translocation into the nucleus to regulate expression of interferon-regulated genes. The polypeptide is Interferon alpha/beta receptor 1b (Oncorhynchus mykiss (Rainbow trout)).